We begin with the raw amino-acid sequence, 472 residues long: 3-isopropylmalate dehydratase large subunit (472 aa).

3 residues coordinate [4Fe-4S] cluster: cysteine 347, cysteine 407, and cysteine 410.

The protein belongs to the aconitase/IPM isomerase family. LeuC type 1 subfamily. Heterodimer of LeuC and LeuD. [4Fe-4S] cluster serves as cofactor.

It catalyses the reaction (2R,3S)-3-isopropylmalate = (2S)-2-isopropylmalate. It participates in amino-acid biosynthesis; L-leucine biosynthesis; L-leucine from 3-methyl-2-oxobutanoate: step 2/4. In terms of biological role, catalyzes the isomerization between 2-isopropylmalate and 3-isopropylmalate, via the formation of 2-isopropylmaleate. In Bacillus licheniformis (strain ATCC 14580 / DSM 13 / JCM 2505 / CCUG 7422 / NBRC 12200 / NCIMB 9375 / NCTC 10341 / NRRL NRS-1264 / Gibson 46), this protein is 3-isopropylmalate dehydratase large subunit.